Reading from the N-terminus, the 696-residue chain is MVGSKDIDLFNLRENEQIVSPCLIVHGKCNKQNGAKTVQVQHPQLPPITYPIHNQFFKATVILTPGENKLTFVTDTNTARTIVCYYTPLTQNPPVHLCLILAKDSPLQFDSPREQKDREGGNGLELAIKKLRLGARLMQAYTNEQMLRNSMGNRTFPFVEEFTWDTLFERPAMRNTIKIHVVRSEKTVKEIQDPDIAQQNSKGKNTGALFGIAMDALKSYGGPFTNNEKPVQAACMFLDTHWDGKLIRGHAALGGGDDSIKLAIFGSHGLYSWPTCLEQLVPYFTDETRSSTSEVANDCNECGTYWECLTITLGAFMHEIGHLLGCPHQESGVMLRGYTTLNRSFLTKEAYSVRTNSTGASPPIFPKEECTWNRLDTVRFLYHPSFTLPQDYYDPSFMRPTKLGGYPNIKHSVYPLGNGSCRILSPTGIYLIEIICDDLARGHIEYLPVSLGGQGPQREVIVTLDDLRARLPKNELAKFGNTFKLKILSVNAPETEFDKFPSLLDVQPLDMSKYGFSKNVQGIKSPLYGRSDGGNAVGVVAFDVRLVTAVRIYHGYALDGVRFYYKEKPTGTKDAPASKPSVPPRNYFSKITHSIKNHASINEENLKSVLFGHETQNFTDATLEPGEIIIGFNLRCGAWVDAIQIITSHGRMTDMFGNKDGGGFAELQPPNGQYILGVTGRVGQWVDAFGIIYGAL.

Lysine 245 is covalently cross-linked (Glycyl lysine isopeptide (Lys-Gly) (interchain with G-Cter in ubiquitin)). Histidine 318 contributes to the Zn(2+) binding site. Glutamate 319 is an active-site residue. Zn(2+) is bound by residues histidine 322 and histidine 328. Phosphoserine is present on serine 361. Glycyl lysine isopeptide (Lys-Gly) (interchain with G-Cter in ubiquitin) cross-links involve residues lysine 478, lysine 518, lysine 579, lysine 590, and lysine 596. The Jacalin-type lectin domain occupies glycine 522–alanine 695.

Belongs to the peptidase M10B family. The cofactor is Zn(2+).

The protein resides in the cytoplasm. The polypeptide is Putative zinc metalloproteinase YIL108W (Saccharomyces cerevisiae (strain ATCC 204508 / S288c) (Baker's yeast)).